A 577-amino-acid chain; its full sequence is ER degradation-enhancing alpha-mannosidase-like protein 2 (577 aa).

The signal sequence occupies residues 1-21; that stretch reads MPFRLLIPLGLVCVLLPLHHG. Residues asparagine 90, asparagine 112, asparagine 289, and asparagine 450 are each glycosylated (N-linked (GlcNAc...) asparagine). The segment at 513-561 is disordered; the sequence is PKRAQRKTVRSGPWEPQSGPATLSSPANQPREKQPAQQRTPLLSCPSQP. 2 stretches are compositionally biased toward polar residues: residues 531–540 and 547–561; these read GPATLSSPAN and PAQQRTPLLSCPSQP.

It belongs to the glycosyl hydrolase 47 family. N-glycosylated.

The protein resides in the endoplasmic reticulum lumen. Its function is as follows. Involved in the endoplasmic reticulum-associated degradation (ERAD) pathway that targets misfolded glycoproteins for degradation in an N-glycan-dependent manner. May initiate ERAD by promoting the first mannose trimming step of ERAD substrates, from Man9GlcNAc2 to Man8GlcNAc2. Seems to recognize and bind to exposed hydrophobic regions in target proteins. The sequence is that of ER degradation-enhancing alpha-mannosidase-like protein 2 from Mus musculus (Mouse).